Here is a 147-residue protein sequence, read N- to C-terminus: uncharacterized protein (147 aa).

The 104-residue stretch at 44 to 147 (LVGYIDKEIH…LKSIKERLSI (104 aa)) folds into the HTH LytTR-type domain.

It is found in the cytoplasm. This is an uncharacterized protein from Staphylococcus aureus (strain Mu50 / ATCC 700699).